The sequence spans 119 residues: MIHGIGIDLIEIDRIKKAFEKQKDKLVKRILTQEEEQQFHSFKSEKRKLEFLSGRFATKEAFSKALGTGLGKTVAFKDINCYNDIKGKPCIDYNGFIVHVSITHTEHYAMSQVLLEKRD.

Mg(2+) is bound by residues D8 and E60.

It belongs to the P-Pant transferase superfamily. AcpS family. Requires Mg(2+) as cofactor.

It localises to the cytoplasm. The enzyme catalyses apo-[ACP] + CoA = holo-[ACP] + adenosine 3',5'-bisphosphate + H(+). Transfers the 4'-phosphopantetheine moiety from coenzyme A to a Ser of acyl-carrier-protein. The polypeptide is Holo-[acyl-carrier-protein] synthase (Staphylococcus haemolyticus (strain JCSC1435)).